A 194-amino-acid polypeptide reads, in one-letter code: Phosphoheptose isomerase (194 aa).

The region spanning 31-186 (ICQRFQAGNK…CEQVESRLFA (156 aa)) is the SIS domain. Substrate is bound at residue 46–48 (NGG). Positions 55 and 59 each coordinate Zn(2+). Substrate-binding positions include glutamate 59, 88 to 89 (ND), 114 to 116 (STS), serine 119, and glutamine 166. Residues glutamine 166 and histidine 174 each contribute to the Zn(2+) site.

It belongs to the SIS family. GmhA subfamily. It depends on Zn(2+) as a cofactor.

Its subcellular location is the cytoplasm. It catalyses the reaction 2 D-sedoheptulose 7-phosphate = D-glycero-alpha-D-manno-heptose 7-phosphate + D-glycero-beta-D-manno-heptose 7-phosphate. It participates in carbohydrate biosynthesis; D-glycero-D-manno-heptose 7-phosphate biosynthesis; D-glycero-alpha-D-manno-heptose 7-phosphate and D-glycero-beta-D-manno-heptose 7-phosphate from sedoheptulose 7-phosphate: step 1/1. In terms of biological role, catalyzes the isomerization of sedoheptulose 7-phosphate in D-glycero-D-manno-heptose 7-phosphate. This is Phosphoheptose isomerase from Synechocystis sp. (strain ATCC 27184 / PCC 6803 / Kazusa).